Here is a 107-residue protein sequence, read N- to C-terminus: UPF0145 protein LVIS_1527 (107 aa).

It belongs to the UPF0145 family.

This chain is UPF0145 protein LVIS_1527, found in Levilactobacillus brevis (strain ATCC 367 / BCRC 12310 / CIP 105137 / JCM 1170 / LMG 11437 / NCIMB 947 / NCTC 947) (Lactobacillus brevis).